The chain runs to 232 residues: 2,3,4,5-tetrahydropyridine-2,6-dicarboxylate N-acetyltransferase (232 aa).

This sequence belongs to the transferase hexapeptide repeat family. DapH subfamily.

The enzyme catalyses (S)-2,3,4,5-tetrahydrodipicolinate + acetyl-CoA + H2O = L-2-acetamido-6-oxoheptanedioate + CoA. The protein operates within amino-acid biosynthesis; L-lysine biosynthesis via DAP pathway; LL-2,6-diaminopimelate from (S)-tetrahydrodipicolinate (acetylase route): step 1/3. Its function is as follows. Catalyzes the transfer of an acetyl group from acetyl-CoA to tetrahydrodipicolinate. This is 2,3,4,5-tetrahydropyridine-2,6-dicarboxylate N-acetyltransferase from Streptococcus pneumoniae serotype 2 (strain D39 / NCTC 7466).